Here is an 81-residue protein sequence, read N- to C-terminus: CLAVATA3/ESR (CLE)-related protein 6 (81 aa).

An N-terminal signal peptide occupies residues 1–26 (MANLILKQSLIILLIIYSTPILSSQA). 2 positions are modified to hydroxyproline: Pro-73 and Pro-76. O-linked (Ara...) hydroxyproline glycosylation occurs at Pro-76.

This sequence belongs to the CLV3/ESR signal peptide family. Post-translationally, the O-glycosylation (arabinosylation) of the hydroxyproline Pro-76 enhances binding affinity of the CLE6p peptide for its receptor. Mostly expressed in roots, seedlings, stems and flowers, and, to a lower extent, in apex and siliques.

It localises to the secreted. Its subcellular location is the extracellular space. Its function is as follows. Extracellular signal peptide that regulates cell fate. The chain is CLAVATA3/ESR (CLE)-related protein 6 from Arabidopsis thaliana (Mouse-ear cress).